The sequence spans 604 residues: Kelch-like protein 15 (604 aa).

One can recognise a BTB domain in the interval Leu31–Met98. Residues Cys133–Lys237 enclose the BACK domain. Kelch repeat units follow at residues Phe328–Lys379, Ile381–Gly426, Leu428–Lys473, Lys489–Lys542, and Ile544–Phe592.

The protein localises to the nucleus. It participates in protein modification; protein ubiquitination. Functionally, substrate-specific adapter for an E3 ubiquitin-protein ligase complex. The sequence is that of Kelch-like protein 15 (klhl15) from Danio rerio (Zebrafish).